Here is a 240-residue protein sequence, read N- to C-terminus: Sugar fermentation stimulation protein homolog (240 aa).

It belongs to the SfsA family.

The chain is Sugar fermentation stimulation protein homolog from Saccharolobus islandicus (strain M.16.4 / Kamchatka #3) (Sulfolobus islandicus).